Consider the following 244-residue polypeptide: tRNA pseudouridine synthase A (244 aa).

Catalysis depends on Asp-52, which acts as the Nucleophile. Residue Tyr-110 coordinates substrate.

Belongs to the tRNA pseudouridine synthase TruA family. Homodimer.

It carries out the reaction uridine(38/39/40) in tRNA = pseudouridine(38/39/40) in tRNA. Its function is as follows. Formation of pseudouridine at positions 38, 39 and 40 in the anticodon stem and loop of transfer RNAs. This chain is tRNA pseudouridine synthase A, found in Geotalea uraniireducens (strain Rf4) (Geobacter uraniireducens).